The chain runs to 194 residues: 5'-deoxynucleotidase VP0926 (194 aa).

Substrate-binding positions include arginine 18–tryptophan 19 and histidine 33. In terms of domain architecture, HD spans valine 30–tyrosine 142. A divalent metal cation contacts are provided by histidine 33, histidine 68, and aspartate 69. Substrate contacts are provided by residues aspartate 69, aspartate 77 to threonine 80, and aspartate 137. Aspartate 137 is a binding site for a divalent metal cation.

It belongs to the 5DNU family. In terms of assembly, homodimer. A divalent metal cation serves as cofactor.

The protein resides in the cytoplasm. The catalysed reaction is a 2'-deoxyribonucleoside 5'-phosphate + H2O = a 2'-deoxyribonucleoside + phosphate. Catalyzes the strictly specific dephosphorylation of 2'-deoxyribonucleoside 5'-monophosphates. The sequence is that of 5'-deoxynucleotidase VP0926 from Vibrio parahaemolyticus serotype O3:K6 (strain RIMD 2210633).